A 248-amino-acid chain; its full sequence is Putative homeobox-leucine zipper protein HOX26 (248 aa).

The interval K50–K118 is disordered. Positions R79–R89 are enriched in basic residues. A DNA-binding region (homeobox) is located at residues A114 to Q173. The tract at residues K172–V216 is leucine-zipper.

Belongs to the HD-ZIP homeobox family. Class II subfamily.

It localises to the nucleus. Probable transcription factor. The polypeptide is Putative homeobox-leucine zipper protein HOX26 (HOX26) (Oryza sativa subsp. japonica (Rice)).